The following is a 38-amino-acid chain: MIEPLVLGLVMGLVPITLAGLFVAAYLQYKRGNQLNLD.

Residues 5–25 (LVLGLVMGLVPITLAGLFVAA) form a helical membrane-spanning segment.

It belongs to the PetG family. The 4 large subunits of the cytochrome b6-f complex are cytochrome b6, subunit IV (17 kDa polypeptide, PetD), cytochrome f and the Rieske protein, while the 4 small subunits are PetG, PetL, PetM and PetN. The complex functions as a dimer.

Its subcellular location is the cellular thylakoid membrane. Its function is as follows. Component of the cytochrome b6-f complex, which mediates electron transfer between photosystem II (PSII) and photosystem I (PSI), cyclic electron flow around PSI, and state transitions. PetG is required for either the stability or assembly of the cytochrome b6-f complex. This Gloeothece citriformis (strain PCC 7424) (Cyanothece sp. (strain PCC 7424)) protein is Cytochrome b6-f complex subunit 5.